A 232-amino-acid chain; its full sequence is 2,3,4,5-tetrahydropyridine-2,6-dicarboxylate N-acetyltransferase (232 aa).

It belongs to the transferase hexapeptide repeat family. DapH subfamily.

It catalyses the reaction (S)-2,3,4,5-tetrahydrodipicolinate + acetyl-CoA + H2O = L-2-acetamido-6-oxoheptanedioate + CoA. It participates in amino-acid biosynthesis; L-lysine biosynthesis via DAP pathway; LL-2,6-diaminopimelate from (S)-tetrahydrodipicolinate (acetylase route): step 1/3. In terms of biological role, catalyzes the transfer of an acetyl group from acetyl-CoA to tetrahydrodipicolinate. In Kosmotoga olearia (strain ATCC BAA-1733 / DSM 21960 / TBF 19.5.1), this protein is 2,3,4,5-tetrahydropyridine-2,6-dicarboxylate N-acetyltransferase.